The chain runs to 199 residues: Interleukin-11 (199 aa).

Residues M1–A21 form the signal peptide. An important for interaction with IL11RA and for the stimulation of cell proliferation region spans residues H182–R190.

This sequence belongs to the IL-6 superfamily. As to quaternary structure, interacts with IL11RA to associate with IL6ST, giving rise to a multimeric signaling complex.

The protein resides in the secreted. Its function is as follows. Cytokine that stimulates the proliferation of hematopoietic stem cells and megakaryocyte progenitor cells and induces megakaryocyte maturation resulting in increased platelet production. Also promotes the proliferation of hepatocytes in response to liver damage. Binding to its receptor formed by IL6ST and IL11RA activates a signaling cascade that promotes cell proliferation. Signaling leads to the activation of intracellular protein kinases and the phosphorylation of STAT3. The interaction with the membrane-bound IL11RA and IL6ST stimulates 'classic signaling', whereas the binding of IL11 and soluble IL11RA to IL6ST stimulates 'trans-signaling'. The polypeptide is Interleukin-11 (Homo sapiens (Human)).